The primary structure comprises 164 residues: 6,7-dimethyl-8-ribityllumazine synthase (164 aa).

5-amino-6-(D-ribitylamino)uracil contacts are provided by residues Phe24, Ala58–Glu60, and Ala82–Ile84. (2S)-2-hydroxy-3-oxobutyl phosphate is bound at residue Glu87 to Thr88. His90 acts as the Proton donor in catalysis. Asn115 serves as a coordination point for 5-amino-6-(D-ribitylamino)uracil. Residue Arg129 coordinates (2S)-2-hydroxy-3-oxobutyl phosphate.

It belongs to the DMRL synthase family.

It carries out the reaction (2S)-2-hydroxy-3-oxobutyl phosphate + 5-amino-6-(D-ribitylamino)uracil = 6,7-dimethyl-8-(1-D-ribityl)lumazine + phosphate + 2 H2O + H(+). It participates in cofactor biosynthesis; riboflavin biosynthesis; riboflavin from 2-hydroxy-3-oxobutyl phosphate and 5-amino-6-(D-ribitylamino)uracil: step 1/2. Catalyzes the formation of 6,7-dimethyl-8-ribityllumazine by condensation of 5-amino-6-(D-ribitylamino)uracil with 3,4-dihydroxy-2-butanone 4-phosphate. This is the penultimate step in the biosynthesis of riboflavin. The polypeptide is 6,7-dimethyl-8-ribityllumazine synthase (Ralstonia nicotianae (strain ATCC BAA-1114 / GMI1000) (Ralstonia solanacearum)).